A 191-amino-acid polypeptide reads, in one-letter code: NADH-quinone oxidoreductase subunit B (191 aa).

Residues C52, C53, C118, and C148 each coordinate [4Fe-4S] cluster.

Belongs to the complex I 20 kDa subunit family. As to quaternary structure, NDH-1 is composed of 14 different subunits. Subunits NuoB, C, D, E, F, and G constitute the peripheral sector of the complex. [4Fe-4S] cluster serves as cofactor.

Its subcellular location is the cell inner membrane. The enzyme catalyses a quinone + NADH + 5 H(+)(in) = a quinol + NAD(+) + 4 H(+)(out). NDH-1 shuttles electrons from NADH, via FMN and iron-sulfur (Fe-S) centers, to quinones in the respiratory chain. The immediate electron acceptor for the enzyme in this species is believed to be a menaquinone. Couples the redox reaction to proton translocation (for every two electrons transferred, four hydrogen ions are translocated across the cytoplasmic membrane), and thus conserves the redox energy in a proton gradient. The chain is NADH-quinone oxidoreductase subunit B from Azobacteroides pseudotrichonymphae genomovar. CFP2.